A 253-amino-acid chain; its full sequence is 5-oxoprolinase subunit A (253 aa).

Belongs to the LamB/PxpA family. In terms of assembly, forms a complex composed of PxpA, PxpB and PxpC.

The enzyme catalyses 5-oxo-L-proline + ATP + 2 H2O = L-glutamate + ADP + phosphate + H(+). In terms of biological role, catalyzes the cleavage of 5-oxoproline to form L-glutamate coupled to the hydrolysis of ATP to ADP and inorganic phosphate. This chain is 5-oxoprolinase subunit A, found in Bacillus cereus (strain B4264).